A 274-amino-acid chain; its full sequence is uncharacterized protein (274 aa).

The next 5 helical transmembrane spans lie at 9 to 29 (SLLL…VSIL), 64 to 84 (WFWH…FFIL), 135 to 155 (LAGH…ALLL), 165 to 185 (MSSM…WQNA), and 219 to 239 (IIVY…LVLG).

It belongs to the steroid 5-alpha reductase family.

Its subcellular location is the endoplasmic reticulum membrane. This is an uncharacterized protein from Schizosaccharomyces pombe (strain 972 / ATCC 24843) (Fission yeast).